The chain runs to 272 residues: HMP-PP phosphatase (272 aa).

Aspartate 8 serves as the catalytic Nucleophile. Residues aspartate 8, aspartate 10, and aspartate 212 each contribute to the Mg(2+) site.

It belongs to the HAD-like hydrolase superfamily. Cof family. Requires Mg(2+) as cofactor.

The catalysed reaction is 4-amino-2-methyl-5-(diphosphooxymethyl)pyrimidine + H2O = 4-amino-2-methyl-5-(phosphooxymethyl)pyrimidine + phosphate + H(+). Catalyzes the hydrolysis of 4-amino-2-methyl-5-hydroxymethylpyrimidine pyrophosphate (HMP-PP) to 4-amino-2-methyl-5-hydroxymethylpyrimidine phosphate (HMP-P). The sequence is that of HMP-PP phosphatase from Salmonella choleraesuis (strain SC-B67).